We begin with the raw amino-acid sequence, 243 residues long: 1-(5-phosphoribosyl)-5-[(5-phosphoribosylamino)methylideneamino] imidazole-4-carboxamide isomerase (243 aa).

The active-site Proton acceptor is the D8. D130 acts as the Proton donor in catalysis.

It belongs to the HisA/HisF family.

Its subcellular location is the cytoplasm. It catalyses the reaction 1-(5-phospho-beta-D-ribosyl)-5-[(5-phospho-beta-D-ribosylamino)methylideneamino]imidazole-4-carboxamide = 5-[(5-phospho-1-deoxy-D-ribulos-1-ylimino)methylamino]-1-(5-phospho-beta-D-ribosyl)imidazole-4-carboxamide. The protein operates within amino-acid biosynthesis; L-histidine biosynthesis; L-histidine from 5-phospho-alpha-D-ribose 1-diphosphate: step 4/9. In Acinetobacter baumannii (strain SDF), this protein is 1-(5-phosphoribosyl)-5-[(5-phosphoribosylamino)methylideneamino] imidazole-4-carboxamide isomerase.